The primary structure comprises 403 residues: S-adenosylmethionine synthase (403 aa).

Histidine 14 is an ATP binding site. Mg(2+) is bound at residue aspartate 16. K(+) is bound at residue glutamate 42. L-methionine is bound by residues glutamate 55 and glutamine 99. The segment at 99 to 109 (QSPEIAEGVDH) is flexible loop. ATP is bound by residues 180 to 182 (DAK), 250 to 251 (RF), aspartate 259, 265 to 266 (RK), alanine 282, and lysine 286. Aspartate 259 serves as a coordination point for L-methionine. Residue lysine 290 coordinates L-methionine.

Belongs to the AdoMet synthase family. Homotetramer; dimer of dimers. It depends on Mg(2+) as a cofactor. K(+) is required as a cofactor.

It is found in the cytoplasm. The enzyme catalyses L-methionine + ATP + H2O = S-adenosyl-L-methionine + phosphate + diphosphate. It functions in the pathway amino-acid biosynthesis; S-adenosyl-L-methionine biosynthesis; S-adenosyl-L-methionine from L-methionine: step 1/1. In terms of biological role, catalyzes the formation of S-adenosylmethionine (AdoMet) from methionine and ATP. The overall synthetic reaction is composed of two sequential steps, AdoMet formation and the subsequent tripolyphosphate hydrolysis which occurs prior to release of AdoMet from the enzyme. In Deinococcus deserti (strain DSM 17065 / CIP 109153 / LMG 22923 / VCD115), this protein is S-adenosylmethionine synthase.